The primary structure comprises 340 residues: PI-PLC X domain-containing protein 2 (340 aa).

Residues 42–215 (HLHNVPLSNL…KYQVLIFYHC (174 aa)) form the PI-PLC X-box domain. Active-site residues include H57 and H132.

In terms of tissue distribution, expressed at highest levels in brain, followed by stomach and small intestine. Detected at low levels in kidney, ey, thymus and slkeletal muscle.

The protein resides in the nucleus. The catalysed reaction is a 1,2-diacyl-sn-glycero-3-phospho-(1D-myo-inositol) + H2O = 1D-myo-inositol 1-phosphate + a 1,2-diacyl-sn-glycerol + H(+). In terms of biological role, catalyzes the hydrolysis of inositol from phosphatidylinositol (1,2-diacyl-sn-glycero-3-phospho-(1D-myo-inositol), PI). Could also hydrolyze various multi-phosphorylated derivatives of PI, such as phosphatidylinositol-4,5 bisphosphate (PIP2), releasing inositol-1,4,5-trisphosphate (IP3) and the protein kinase C activator diacylglycerol (DAG), therefore mediating cell signaling. In Mus musculus (Mouse), this protein is PI-PLC X domain-containing protein 2 (Plcxd2).